We begin with the raw amino-acid sequence, 195 residues long: dCTP deaminase (195 aa).

DCTP contacts are provided by residues 110–115 (RSSLAR), Asp-128, 136–138 (VLE), Tyr-171, Lys-178, and Gln-182. The Proton donor/acceptor role is filled by Glu-138. The disordered stretch occupies residues 171–195 (YSSRKDAKYKNQQSAVASRIDEDKE).

Belongs to the dCTP deaminase family. As to quaternary structure, homotrimer.

The catalysed reaction is dCTP + H2O + H(+) = dUTP + NH4(+). The protein operates within pyrimidine metabolism; dUMP biosynthesis; dUMP from dCTP (dUTP route): step 1/2. Its function is as follows. Catalyzes the deamination of dCTP to dUTP. In Haemophilus influenzae (strain ATCC 51907 / DSM 11121 / KW20 / Rd), this protein is dCTP deaminase.